Here is a 73-residue protein sequence, read N- to C-terminus: Putative membrane protein insertion efficiency factor (73 aa).

Belongs to the UPF0161 family.

It localises to the cell inner membrane. In terms of biological role, could be involved in insertion of integral membrane proteins into the membrane. This Rickettsia bellii (strain OSU 85-389) protein is Putative membrane protein insertion efficiency factor.